We begin with the raw amino-acid sequence, 264 residues long: Acyl-[acyl-carrier-protein]--UDP-N-acetylglucosamine O-acyltransferase (264 aa).

This sequence belongs to the transferase hexapeptide repeat family. LpxA subfamily. In terms of assembly, homotrimer.

It localises to the cytoplasm. The catalysed reaction is a (3R)-hydroxyacyl-[ACP] + UDP-N-acetyl-alpha-D-glucosamine = a UDP-3-O-[(3R)-3-hydroxyacyl]-N-acetyl-alpha-D-glucosamine + holo-[ACP]. Its pathway is glycolipid biosynthesis; lipid IV(A) biosynthesis; lipid IV(A) from (3R)-3-hydroxytetradecanoyl-[acyl-carrier-protein] and UDP-N-acetyl-alpha-D-glucosamine: step 1/6. In terms of biological role, involved in the biosynthesis of lipid A, a phosphorylated glycolipid that anchors the lipopolysaccharide to the outer membrane of the cell. This is Acyl-[acyl-carrier-protein]--UDP-N-acetylglucosamine O-acyltransferase from Rickettsia felis (strain ATCC VR-1525 / URRWXCal2) (Rickettsia azadi).